The following is a 349-amino-acid chain: Ferredoxin--NADP reductase 3 (349 aa).

FAD-binding residues include Glu34, Lys42, Tyr46, Val86, Ile120, Asp287, and Ser328.

It belongs to the ferredoxin--NADP reductase type 2 family. In terms of assembly, homodimer. FAD serves as cofactor.

It carries out the reaction 2 reduced [2Fe-2S]-[ferredoxin] + NADP(+) + H(+) = 2 oxidized [2Fe-2S]-[ferredoxin] + NADPH. This is Ferredoxin--NADP reductase 3 from Lysinibacillus sphaericus (strain C3-41).